Consider the following 58-residue polypeptide: Photosystem II reaction center protein K (58 aa).

The propeptide occupies 1-21; that stretch reads MFNAYLDTVLDLSANGTVILA. The chain crosses the membrane as a helical span at residues 29–49; that stretch reads IFDPIVDVMPIIPVFFLLLAF.

Belongs to the PsbK family. In terms of assembly, PSII is composed of 1 copy each of membrane proteins PsbA, PsbB, PsbC, PsbD, PsbE, PsbF, PsbH, PsbI, PsbJ, PsbK, PsbL, PsbM, PsbT, PsbX, PsbY, PsbZ, Psb30/Ycf12, at least 3 peripheral proteins of the oxygen-evolving complex and a large number of cofactors. It forms dimeric complexes.

It is found in the plastid. The protein resides in the chloroplast thylakoid membrane. Functionally, one of the components of the core complex of photosystem II (PSII). PSII is a light-driven water:plastoquinone oxidoreductase that uses light energy to abstract electrons from H(2)O, generating O(2) and a proton gradient subsequently used for ATP formation. It consists of a core antenna complex that captures photons, and an electron transfer chain that converts photonic excitation into a charge separation. The chain is Photosystem II reaction center protein K from Staurastrum punctulatum (Green alga).